Here is a 306-residue protein sequence, read N- to C-terminus: Reticulocalbin-2 (306 aa).

Residues 1–22 form the signal peptide; the sequence is MESPTLLGLLLLLLGGPGTSLG. 6 consecutive EF-hand domains span residues 50–85, 86–121, 144–173, 175–210, 226–251, and 252–287; these read EQQK…SFKS, YIIE…RVID, KKRF…EEAD, MKEF…DPAA, NDYD…NNEG, and LAQE…FLNS. Asp-99, Asp-101, Asp-103, Arg-105, and Glu-110 together coordinate Ca(2+). Residues Asp-188, Asp-190, Asp-192, Glu-199, Asp-229, Asp-231, Asp-233, Lys-235, Glu-240, Asp-265, Asp-267, Asp-269, Arg-271, and Glu-276 each coordinate Ca(2+).

This sequence belongs to the CREC family. May bind phospholipase A2, since the rat reticulocalbin-2 has been isolated on the phospholipase complex taipoxin columns. Expressed by the venom gland.

Its subcellular location is the secreted. The protein is Reticulocalbin-2 of Crotalus adamanteus (Eastern diamondback rattlesnake).